A 160-amino-acid polypeptide reads, in one-letter code: Cyclic pyranopterin monophosphate synthase (160 aa).

Substrate is bound by residues 75–77 (LCH) and 113–114 (ME). The active site involves Asp128.

Belongs to the MoaC family. As to quaternary structure, homohexamer; trimer of dimers.

The enzyme catalyses (8S)-3',8-cyclo-7,8-dihydroguanosine 5'-triphosphate = cyclic pyranopterin phosphate + diphosphate. The protein operates within cofactor biosynthesis; molybdopterin biosynthesis. Its function is as follows. Catalyzes the conversion of (8S)-3',8-cyclo-7,8-dihydroguanosine 5'-triphosphate to cyclic pyranopterin monophosphate (cPMP). This Haemophilus influenzae (strain PittEE) protein is Cyclic pyranopterin monophosphate synthase.